Here is a 65-residue protein sequence, read N- to C-terminus: Small ribosomal subunit protein bS21 (65 aa).

It belongs to the bacterial ribosomal protein bS21 family.

The polypeptide is Small ribosomal subunit protein bS21 (Geobacter sp. (strain M21)).